Consider the following 358-residue polypeptide: Protein RecA (358 aa).

Residue Gly-69 to Thr-76 participates in ATP binding.

The protein belongs to the RecA family.

The protein localises to the cytoplasm. Functionally, can catalyze the hydrolysis of ATP in the presence of single-stranded DNA, the ATP-dependent uptake of single-stranded DNA by duplex DNA, and the ATP-dependent hybridization of homologous single-stranded DNAs. It interacts with LexA causing its activation and leading to its autocatalytic cleavage. The sequence is that of Protein RecA from Trichormus variabilis (strain ATCC 29413 / PCC 7937) (Anabaena variabilis).